A 354-amino-acid polypeptide reads, in one-letter code: Serum paraoxonase/arylesterase 2 (354 aa).

Cysteine 42 and cysteine 352 are joined by a disulfide. Ca(2+)-binding residues include glutamate 53 and aspartate 54. Histidine 114 (proton acceptor) is an active-site residue. Positions 116, 167, 168, and 223 each coordinate Ca(2+). A glycan (N-linked (GlcNAc...) asparagine) is linked at asparagine 254. Ca(2+) contacts are provided by aspartate 268 and asparagine 269. N-linked (GlcNAc...) asparagine glycans are attached at residues asparagine 269 and asparagine 323.

It belongs to the paraoxonase family. Homotrimer. Ca(2+) serves as cofactor. In terms of processing, glycosylated. The signal sequence is not cleaved.

The protein resides in the membrane. The enzyme catalyses a phenyl acetate + H2O = a phenol + acetate + H(+). It carries out the reaction an N-acyl-L-homoserine lactone + H2O = an N-acyl-L-homoserine + H(+). Capable of hydrolyzing lactones and a number of aromatic carboxylic acid esters. The protein is Serum paraoxonase/arylesterase 2 (PON2) of Bos taurus (Bovine).